We begin with the raw amino-acid sequence, 508 residues long: Maturase K (508 aa).

The protein belongs to the intron maturase 2 family. MatK subfamily.

The protein resides in the plastid. It localises to the chloroplast. Usually encoded in the trnK tRNA gene intron. Probably assists in splicing its own and other chloroplast group II introns. The sequence is that of Maturase K from Wolffia arrhiza (Rootless water-meal).